The primary structure comprises 718 residues: uncharacterized protein (718 aa).

This sequence belongs to the asfivirus C717R family.

The protein localises to the virion. This is an uncharacterized protein from African swine fever virus (isolate Pig/Kenya/KEN-50/1950) (ASFV).